The sequence spans 244 residues: Small ribosomal subunit protein uS2 (244 aa).

It belongs to the universal ribosomal protein uS2 family.

This chain is Small ribosomal subunit protein uS2, found in Buchnera aphidicola subsp. Schizaphis graminum (strain Sg).